Reading from the N-terminus, the 360-residue chain is Aspartate beta-hydroxylase domain-containing protein 1 (360 aa).

Topologically, residues 1–45 are cytoplasmic; that stretch reads MWKGGNQEAVIEGSGGELGVPGSWGLQDAACHLARASLPIMFPWP. A helical membrane pass occupies residues 46 to 68; it reads LPLGSSALTMLLGALTSLFLWYC. Over 69-360 the chain is Lumenal; that stretch reads YRLGSQDMQA…ALDFVFAPDP (292 aa).

Belongs to the aspartyl/asparaginyl beta-hydroxylase family.

It is found in the membrane. This Mus musculus (Mouse) protein is Aspartate beta-hydroxylase domain-containing protein 1 (Asphd1).